The following is a 96-amino-acid chain: Co-chaperonin GroES (96 aa).

The protein belongs to the GroES chaperonin family. Heptamer of 7 subunits arranged in a ring. Interacts with the chaperonin GroEL.

The protein localises to the cytoplasm. Its function is as follows. Together with the chaperonin GroEL, plays an essential role in assisting protein folding. The GroEL-GroES system forms a nano-cage that allows encapsulation of the non-native substrate proteins and provides a physical environment optimized to promote and accelerate protein folding. GroES binds to the apical surface of the GroEL ring, thereby capping the opening of the GroEL channel. The chain is Co-chaperonin GroES from Thiobacillus denitrificans (strain ATCC 25259 / T1).